The primary structure comprises 226 residues: Ribose-5-phosphate isomerase A (226 aa).

Residues 26–29 (TGST), 82–85 (DGAD), and 95–98 (KGGG) contribute to the substrate site. Catalysis depends on E104, which acts as the Proton acceptor. K122 provides a ligand contact to substrate.

The protein belongs to the ribose 5-phosphate isomerase family. As to quaternary structure, homodimer.

The catalysed reaction is aldehydo-D-ribose 5-phosphate = D-ribulose 5-phosphate. It functions in the pathway carbohydrate degradation; pentose phosphate pathway; D-ribose 5-phosphate from D-ribulose 5-phosphate (non-oxidative stage): step 1/1. Functionally, catalyzes the reversible conversion of ribose-5-phosphate to ribulose 5-phosphate. This chain is Ribose-5-phosphate isomerase A, found in Streptococcus thermophilus (strain CNRZ 1066).